A 65-amino-acid polypeptide reads, in one-letter code: Large ribosomal subunit protein bL33m (65 aa).

The N-terminal 8 residues, 1–8 (MLLSAVSF), are a transit peptide targeting the mitochondrion.

Belongs to the bacterial ribosomal protein bL33 family. Component of the mitochondrial ribosome large subunit (39S) which comprises a 16S rRNA and about 50 distinct proteins.

Its subcellular location is the mitochondrion. This chain is Large ribosomal subunit protein bL33m (Mrpl33), found in Mus musculus (Mouse).